Reading from the N-terminus, the 431-residue chain is MKAVRINERLTIAGQPMIADFPSLSAQGFKSIINARPDGEEPGQPGNTQEKSAAGAAGMDYGFIPVSGPTITEADIRAFQQKMAEAEGPVFAHCKGGTRALTLYVLGEALDGRIQRSDIEDFGKTHGFDLCAATRWLERQSAAVPHIKAFFDPRTWSVQYVVSDPATGGCAIIDPVYDFDEKSGATGTMNADAILDYVKRHGLSVEWILDTHPHADHFSAADYLKQKTGAKTAIGAKVTGVQKLWQEKYNWSDFKTDGSQWDQLFEAGDRFSIGSLEARVLFSPGHTLASVTYVVGNAAFVHDTLFMPDSGTARADFPGGSAKQLWASIQDILALPDDTRLFTGHDYQPGGRAPKWESTVGEQTRSNPHLAGMTEEDFVRLREARDRTLPMPKLILHALQVNIRGGRLPEPEANGKHYLKFPLDVLEGSTW.

Zn(2+)-binding residues include His-212, His-214, and His-286. Position 309 (Asp-309) interacts with substrate.

Belongs to the metallo-beta-lactamase superfamily. It depends on Zn(2+) as a cofactor.

Functionally, could play a role in cell adherence or biofilm development. The chain is Beta-lactamase hydrolase-like protein from Agrobacterium fabrum (strain C58 / ATCC 33970) (Agrobacterium tumefaciens (strain C58)).